A 254-amino-acid chain; its full sequence is Vitamin B12 import ATP-binding protein BtuD (254 aa).

One can recognise an ABC transporter domain in the interval 1–239 (MHINHISVGN…ENLQQVFETP (239 aa)). 29-36 (GPNGSGKS) serves as a coordination point for ATP.

This sequence belongs to the ABC transporter superfamily. Vitamin B12 importer (TC 3.A.1.13.1) family. As to quaternary structure, the complex is composed of two ATP-binding proteins (BtuD), two transmembrane proteins (BtuC) and a solute-binding protein (BtuF).

The protein resides in the cell inner membrane. The enzyme catalyses an R-cob(III)alamin(out) + ATP + H2O = an R-cob(III)alamin(in) + ADP + phosphate + H(+). Its function is as follows. Part of the ABC transporter complex BtuCDF involved in vitamin B12 import. Responsible for energy coupling to the transport system. This is Vitamin B12 import ATP-binding protein BtuD from Vibrio vulnificus (strain YJ016).